A 369-amino-acid polypeptide reads, in one-letter code: Flagellar P-ring protein 1 (369 aa).

Residues M1–A23 form the signal peptide.

The protein belongs to the FlgI family. As to quaternary structure, the basal body constitutes a major portion of the flagellar organelle and consists of four rings (L,P,S, and M) mounted on a central rod.

Its subcellular location is the periplasm. It is found in the bacterial flagellum basal body. Functionally, assembles around the rod to form the L-ring and probably protects the motor/basal body from shearing forces during rotation. This Yersinia pseudotuberculosis serotype I (strain IP32953) protein is Flagellar P-ring protein 1.